A 719-amino-acid polypeptide reads, in one-letter code: Protein STRUBBELIG-RECEPTOR FAMILY 6 (719 aa).

The N-terminal stretch at 1–29 is a signal peptide; sequence MRENWAVVALFTLCIVGFELRFIHGATDA. Residues 30–293 are Extracellular-facing; sequence SDTSALNTLF…SKKSGIGAGA (264 aa). LRR repeat units lie at residues 97 to 118, 119 to 140, 143 to 164, 167 to 190, 191 to 213, and 214 to 234; these read SLTE…QFPP, NLQR…SLSQ, PLKY…DFSK, SLTT…SSLT, SLKS…AGLP, and LETL…SLKG. Positions 242–287 are disordered; the sequence is NSFNTGPAPPPPPGTPPIRGSPSRKSGGRESRSSDESTRNGDSKKS. Pro residues predominate over residues 248 to 257; the sequence is PAPPPPPGTP. Over residues 268–286 the composition is skewed to basic and acidic residues; that stretch reads GGRESRSSDESTRNGDSKK. The helical transmembrane segment at 294–314 threads the bilayer; the sequence is IAGIIISLLVVTALLVAFFLF. Residues 315–719 lie on the Cytoplasmic side of the membrane; it reads RRKKSKRSSP…GSADTTSDYM (405 aa). 2 disordered regions span residues 322–355 and 364–383; these read SSPM…SSVE and SINL…DEDS. Residues 332–354 show a composition bias toward polar residues; the sequence is NQPFTLASNDFHENNSIQSSSSV. Ser377 is modified (phosphoserine). The Protein kinase domain maps to 416–690; that stretch reads FSVDNLLGEG…SEVVQALVVL (275 aa). Residues 422-430 and Lys444 each bind ATP; that span reads LGEGTFGRV. The disordered stretch occupies residues 700-719; that stretch reads TVGVDPSQRAGSADTTSDYM. Polar residues predominate over residues 708–719; the sequence is RAGSADTTSDYM.

It belongs to the protein kinase superfamily. Ser/Thr protein kinase family. As to expression, expressed in seedlings, roots, stems, leaves, flowers and siliques.

The protein localises to the membrane. This chain is Protein STRUBBELIG-RECEPTOR FAMILY 6 (SRF6), found in Arabidopsis thaliana (Mouse-ear cress).